The sequence spans 176 residues: Nutrient stress-induced DNA-binding protein (176 aa).

The protein belongs to the Dps family. Hexamer.

Functionally, involved in protection of chromosomal DNA from damage under nutrient-limited and oxidative stress conditions. Binds heme. This is Nutrient stress-induced DNA-binding protein (dpsA) from Synechococcus sp. (strain ATCC 27144 / PCC 6301 / SAUG 1402/1) (Anacystis nidulans).